The chain runs to 405 residues: Replication factor C large subunit (405 aa).

An ATP-binding site is contributed by Gly47–Thr54.

Belongs to the activator 1 small subunits family. RfcL subfamily. Heteromultimer composed of small subunits (RfcS) and large subunits (RfcL).

Part of the RFC clamp loader complex which loads the PCNA sliding clamp onto DNA. This chain is Replication factor C large subunit, found in Saccharolobus islandicus (strain M.16.4 / Kamchatka #3) (Sulfolobus islandicus).